The primary structure comprises 358 residues: Dihydroorotate dehydrogenase (quinone) (358 aa).

FMN is bound by residues 61 to 65 (AGFDK) and Gly-85. Lys-65 is a binding site for substrate. Residue 110–114 (NRFGL) coordinates substrate. Residues Asn-139 and Asn-170 each contribute to the FMN site. Asn-170 is a binding site for substrate. Ser-173 acts as the Nucleophile in catalysis. Position 175 (Asn-175) interacts with substrate. Lys-211 and Ser-239 together coordinate FMN. Residue 240–241 (NT) coordinates substrate. FMN is bound by residues Gly-263, Gly-292, and 313–314 (YS).

Belongs to the dihydroorotate dehydrogenase family. Type 2 subfamily. In terms of assembly, monomer. Requires FMN as cofactor.

It localises to the cell membrane. It carries out the reaction (S)-dihydroorotate + a quinone = orotate + a quinol. The protein operates within pyrimidine metabolism; UMP biosynthesis via de novo pathway; orotate from (S)-dihydroorotate (quinone route): step 1/1. Catalyzes the conversion of dihydroorotate to orotate with quinone as electron acceptor. The polypeptide is Dihydroorotate dehydrogenase (quinone) (Methylorubrum extorquens (strain CM4 / NCIMB 13688) (Methylobacterium extorquens)).